The primary structure comprises 379 residues: MTNLRKTHPLMKIINHTFIDLPAPSNFSAWWNFGSLLGICLILQIITGLFLAMHYTADTESAFSSVTHICRDVNYGWMIRYMHANGASMFFICLFIHIGRGMYYGSYLFLETWNIGVILLFTTMATAFMGYVLPWGQMSFWGATVITNLLSAIPYIGTDLVQWIWGGFSVDKATLTRFFAFHFILPFIIMALAAVHLLFLHEKGSNNPTGIDSDSDKIPFHPYYTMKDIMGFLTMFLALLTLVLFYPDALGDPDNYTPANPLVTPPHIKPEWYFLFAYAILRSIPNKLGGVVALMLSILILIFLPMMHTSKQRGMMFRPLSQCMFWILVANLLTLTWIGGQPVEPPFIMIGQLASLSYFLIILIIMPSISLLENKFMKW.

A run of 4 helical transmembrane segments spans residues 33-53, 77-98, 113-133, and 178-198; these read FGSL…FLAM, WMIR…FIHI, WNIG…GYVL, and FFAF…VHLL. Histidine 83 and histidine 97 together coordinate heme b. 2 residues coordinate heme b: histidine 182 and histidine 196. Histidine 201 provides a ligand contact to a ubiquinone. A run of 4 helical transmembrane segments spans residues 226 to 246, 288 to 308, 320 to 340, and 347 to 367; these read MKDI…VLFY, LGGV…PMMH, LSQC…WIGG, and FIMI…IIMP.

It belongs to the cytochrome b family. The cytochrome bc1 complex contains 11 subunits: 3 respiratory subunits (MT-CYB, CYC1 and UQCRFS1), 2 core proteins (UQCRC1 and UQCRC2) and 6 low-molecular weight proteins (UQCRH/QCR6, UQCRB/QCR7, UQCRQ/QCR8, UQCR10/QCR9, UQCR11/QCR10 and a cleavage product of UQCRFS1). This cytochrome bc1 complex then forms a dimer. It depends on heme b as a cofactor.

It is found in the mitochondrion inner membrane. In terms of biological role, component of the ubiquinol-cytochrome c reductase complex (complex III or cytochrome b-c1 complex) that is part of the mitochondrial respiratory chain. The b-c1 complex mediates electron transfer from ubiquinol to cytochrome c. Contributes to the generation of a proton gradient across the mitochondrial membrane that is then used for ATP synthesis. The protein is Cytochrome b (MT-CYB) of Massoutiera mzabi (Mzab gundi).